An 800-amino-acid chain; its full sequence is Ribosome-releasing factor 2, mitochondrial (800 aa).

In terms of domain architecture, tr-type G spans 21 to 307 (SKVRNIGIIA…AIANYLPSPS (287 aa)). GTP is bound by residues 30–37 (AHIDAGKT), 95–99 (DTPGH), and 147–150 (NKMD).

Belongs to the TRAFAC class translation factor GTPase superfamily. Classic translation factor GTPase family. EF-G/EF-2 subfamily.

It localises to the mitochondrion. In terms of biological role, mitochondrial GTPase that mediates the disassembly of ribosomes from messenger RNA at the termination of mitochondrial protein biosynthesis. Not involved in the GTP-dependent ribosomal translocation step during translation elongation. The polypeptide is Ribosome-releasing factor 2, mitochondrial (Kluyveromyces lactis (strain ATCC 8585 / CBS 2359 / DSM 70799 / NBRC 1267 / NRRL Y-1140 / WM37) (Yeast)).